Consider the following 156-residue polypeptide: Large ribosomal subunit protein uL23 (156 aa).

Residues 1 to 19 (MAPKAKKEAPAPPKAEAKA) show a composition bias toward basic and acidic residues. Residues 1–67 (MAPKAKKEAP…PKYPRKSAPR (67 aa)) are disordered. Alanine 2 carries the n,N,N-trimethylalanine modification. Lysine 14 participates in a covalent cross-link: Glycyl lysine isopeptide (Lys-Gly) (interchain with G-Cter in SUMO2). Residues 20–67 (KALKAKKAVLKGVHSHKKKKIRTSPTFRRPKTLRLRRQPKYPRKSAPR) show a composition bias toward basic residues. A beta-like import receptor binding (BIB) domain region spans residues 32–74 (VHSHKKKKIRTSPTFRRPKTLRLRRQPKYPRKSAPRRNKLDHY). A Citrulline modification is found at arginine 41. Serine 43 is subject to Phosphoserine. Threonine 45 is subject to Phosphothreonine. Lysine 70 carries the post-translational modification N6-acetyllysine.

The protein belongs to the universal ribosomal protein uL23 family. Component of the large ribosomal subunit. Interacts with LYAR and GNL2. Interacts with MDM2; this interaction may promote MDM2-mediated p53/TP53 polyubiquitination. Directly interacts (via BIB domain) with IPO5, IPO7, KPNB1 and TNPO1; these interactions are involved in RPL23A nuclear import for the assembly of ribosomal subunits. Interacts with IPO8. N-terminus is methylated by METTL11A/NTM1. Post-translationally, citrullinated by PADI4.

It is found in the cytoplasm. The protein resides in the nucleus. In terms of biological role, component of the large ribosomal subunit. The ribosome is a large ribonucleoprotein complex responsible for the synthesis of proteins in the cell. Binds a specific region on the 26S rRNA. May promote p53/TP53 degradation possibly through the stimulation of MDM2-mediated TP53 polyubiquitination. This Bos taurus (Bovine) protein is Large ribosomal subunit protein uL23 (RPL23A).